The sequence spans 955 residues: MASSQEKAKTGVLRNAAALLDEMQLMGETQGAKKVINSELWHACAGPLVCLPQRGSLVYYFPQGHSEQVAATTRKIPNSRIPNYPNLPSQLLCQVHNITLHADKDTDEVYAQMTLQPVNSETDVFPIPTLGAYTKSKHPTEYFCKNLTASDTSTHGGFSVPRRAAEKLFPQLDYSMQPPNQELIVRDLHDNMWTFRHIYRGQPKRHLLTTGWSLFVGAKRLKAGDSVLFIRDEKSQLLLGVRRATRQQTMLSSSVLSTDSMHIGVLAAAAHAASSGSSFTIYYNPRTSPSPFVIPVARYNKATYMQPSVGMRFAMMFETEESSKRRYTGTVVGISDYDPMRWPNSKWRNLQVEWDEHGYGERPERVSIWDIETPENTLVFPSSTLNSKRQCLPGYGVSVPGMEIGSANMSSFPRAQGNPYGSLQHIPAVGSELAIMLLNQSGQTLGSPLSFHQSSYSSIIQNVKQNYIPPLTVSTSACLTKQESLPSDDAQHQFHMANMQNGDLEGSEVQPVIDSISESKLNATSRDPRNTDSYTSRSTSEQNSKGEPRGKTRRSKKGLPHKTVSEKSDLSSAPSWICDNQQVGLESKLVGCDEQVNCGNIEDSSGALTQGNFVGQPHGHQVEQKGVLSPPKVESSKSPDGGKSVNSFPNQGCFSQFIDGLDWMTQPSYYQDSNVIQPAGVSENIFSSSADIPPSMIADTMETFQASCLSDCLPNSIQEFISSPDLNSLTFLSPDMQNLEVQLQHDGSNLPSTSNSFVQMSFSEESASQSANLSGLHMESTHRSINTTSCSQPMSTGGFDAGMYSKLPRLKESQILSLPEIHTNSMGTSACSMDATEYSLDRSAKPMKPPVRTYTKVQKQGSVGRSIDVTGFRNYHELRSAIACMFGLQGKLEHPGSSEWKLVYVDYENDVLLVGDDPWEEFINCVRCIRILSPSEVQQMSENGMHVLNDCIQAA.

A DNA-binding region (TF-B3) is located at residues 143-245; it reads FCKNLTASDT…QLLLGVRRAT (103 aa). Polar residues predominate over residues 518–543; the sequence is ESKLNATSRDPRNTDSYTSRSTSEQN. Disordered regions lie at residues 518 to 573 and 609 to 646; these read ESKL…LSSA and TQGN…KSVN. Residues 551-560 show a composition bias toward basic residues; sequence KTRRSKKGLP. The 85-residue stretch at 852-936 folds into the PB1 domain; it reads RTYTKVQKQG…RCIRILSPSE (85 aa).

The protein belongs to the ARF family. Homodimers and heterodimers.

The protein resides in the nucleus. Functionally, auxin response factors (ARFs) are transcriptional factors that bind specifically to the DNA sequence 5'-TGTCTC-3' found in the auxin-responsive promoter elements (AuxREs). The polypeptide is Auxin response factor 11 (ARF11) (Oryza sativa subsp. indica (Rice)).